The chain runs to 155 residues: MRIGLGYDVHKLVENRPLIIGGVTIPHDKGLLGHSDADVLVHAIMDALLGAAALGDIGKHFPDSDKNFKNISSLLLLSKVKDLINKEGYKIVNIDCTIIAQKPKMLYHIDAMKKNICKCLKLDNNMLNIKATTEEGLGFTGKEEGISANAICLLD.

Residues Asp8 and His10 each contribute to the a divalent metal cation site. Residues 8-10 (DVH) and 34-35 (HS) contribute to the 4-CDP-2-C-methyl-D-erythritol 2-phosphate site. Residue His42 coordinates a divalent metal cation. Residues 56–58 (DIG), 61–65 (FPDSD), 100–106 (AQKPKML), 132–135 (TTEE), Phe139, and Lys142 contribute to the 4-CDP-2-C-methyl-D-erythritol 2-phosphate site.

This sequence belongs to the IspF family. Homotrimer. Requires a divalent metal cation as cofactor.

The catalysed reaction is 4-CDP-2-C-methyl-D-erythritol 2-phosphate = 2-C-methyl-D-erythritol 2,4-cyclic diphosphate + CMP. The protein operates within isoprenoid biosynthesis; isopentenyl diphosphate biosynthesis via DXP pathway; isopentenyl diphosphate from 1-deoxy-D-xylulose 5-phosphate: step 4/6. Its function is as follows. Involved in the biosynthesis of isopentenyl diphosphate (IPP) and dimethylallyl diphosphate (DMAPP), two major building blocks of isoprenoid compounds. Catalyzes the conversion of 4-diphosphocytidyl-2-C-methyl-D-erythritol 2-phosphate (CDP-ME2P) to 2-C-methyl-D-erythritol 2,4-cyclodiphosphate (ME-CPP) with a corresponding release of cytidine 5-monophosphate (CMP). The polypeptide is 2-C-methyl-D-erythritol 2,4-cyclodiphosphate synthase (Clostridium botulinum (strain ATCC 19397 / Type A)).